A 242-amino-acid polypeptide reads, in one-letter code: Tryptophan synthase alpha chain (242 aa).

Catalysis depends on proton acceptor residues Glu-31 and Asp-42.

Belongs to the TrpA family. In terms of assembly, tetramer of two alpha and two beta chains.

The catalysed reaction is (1S,2R)-1-C-(indol-3-yl)glycerol 3-phosphate + L-serine = D-glyceraldehyde 3-phosphate + L-tryptophan + H2O. It participates in amino-acid biosynthesis; L-tryptophan biosynthesis; L-tryptophan from chorismate: step 5/5. In terms of biological role, the alpha subunit is responsible for the aldol cleavage of indoleglycerol phosphate to indole and glyceraldehyde 3-phosphate. The polypeptide is Tryptophan synthase alpha chain (Staphylococcus aureus (strain Mu3 / ATCC 700698)).